Here is a 486-residue protein sequence, read N- to C-terminus: Nucleolar protein 56 (486 aa).

The region spanning 298–416 is the Nop domain; that stretch reads CAPSLSALIG…VEDRLEYFTS (119 aa). Residues 450-486 form a disordered region; that stretch reads KKAKRLAEESVTATAEAEVDEDAPKPKKKKKSKAGDE. Basic residues predominate over residues 475–486; sequence PKKKKKSKAGDE.

The protein belongs to the NOP5/NOP56 family.

It is found in the nucleus. It localises to the nucleolus. Its function is as follows. Required for 60S ribosomal subunit synthesis. The sequence is that of Nucleolar protein 56 from Caenorhabditis elegans.